Reading from the N-terminus, the 196-residue chain is Protein kinase OspG (196 aa).

The protein belongs to the protein kinase superfamily. Post-translationally, autophosphorylated.

The protein resides in the secreted. The protein localises to the host cell. In terms of biological role, effector proteins function to alter host cell physiology and promote bacterial survival in host tissues. This protein is a kinase that is involved in down-regulation of the host innate response induced by invasive bacteria. This chain is Protein kinase OspG (ospG), found in Shigella flexneri serotype X (strain 2002017).